We begin with the raw amino-acid sequence, 896 residues long: Translation initiation factor IF-2 (896 aa).

Over residues 117-174 (AEAEAKAKAEAEAKAKVDAEAKVKAKAEAEAKAKAKVQTEKPAAETAEDKAAKAEEAK) the composition is skewed to basic and acidic residues. Residues 117 to 303 (AEAEAKAKAE…TRSVAPESMD (187 aa)) are disordered. Residues 175–195 (LLAAQDAVAKAKANEEASAAA) are compositionally biased toward low complexity. Over residues 196 to 227 (DEARRLAEENEKRWAEEEKARKEAEKSVDHHV) the composition is skewed to basic and acidic residues. Low complexity predominate over residues 254-268 (PSANAGNNANANAGA). Positions 396-563 (PRAPVVTIMG…GILLEAEVLE (168 aa)) constitute a tr-type G domain. A G1 region spans residues 405-412 (GHVDHGKT). Residue 405 to 412 (GHVDHGKT) participates in GTP binding. The segment at 430 to 434 (GITQH) is G2. The segment at 451 to 454 (DTPG) is G3. Residues 451–455 (DTPGH) and 505–508 (NKID) contribute to the GTP site. Residues 505–508 (NKID) form a G4 region. The G5 stretch occupies residues 541–543 (SAK).

The protein belongs to the TRAFAC class translation factor GTPase superfamily. Classic translation factor GTPase family. IF-2 subfamily.

The protein resides in the cytoplasm. One of the essential components for the initiation of protein synthesis. Protects formylmethionyl-tRNA from spontaneous hydrolysis and promotes its binding to the 30S ribosomal subunits. Also involved in the hydrolysis of GTP during the formation of the 70S ribosomal complex. This Shewanella pealeana (strain ATCC 700345 / ANG-SQ1) protein is Translation initiation factor IF-2.